Reading from the N-terminus, the 86-residue chain is Large ribosomal subunit protein uL23 (86 aa).

Belongs to the universal ribosomal protein uL23 family. Part of the 50S ribosomal subunit. Contacts protein L29.

Functionally, binds to 23S rRNA. One of the proteins that surrounds the polypeptide exit tunnel on the outside of the ribosome. This chain is Large ribosomal subunit protein uL23, found in Thermococcus gammatolerans (strain DSM 15229 / JCM 11827 / EJ3).